The chain runs to 310 residues: ATP phosphoribosyltransferase (310 aa).

Belongs to the ATP phosphoribosyltransferase family.

The protein resides in the cytoplasm. The catalysed reaction is 1-(5-phospho-beta-D-ribosyl)-ATP + diphosphate = 5-phospho-alpha-D-ribose 1-diphosphate + ATP. It functions in the pathway amino-acid biosynthesis; L-histidine biosynthesis; L-histidine from 5-phospho-alpha-D-ribose 1-diphosphate: step 1/9. Its function is as follows. Catalyzes the condensation of ATP and 5-phosphoribose 1-diphosphate to form N'-(5'-phosphoribosyl)-ATP (PR-ATP). Has a crucial role in the pathway because the rate of histidine biosynthesis seems to be controlled primarily by regulation of HisG enzymatic activity. The polypeptide is ATP phosphoribosyltransferase (his1) (Schizosaccharomyces pombe (strain 972 / ATCC 24843) (Fission yeast)).